A 62-amino-acid polypeptide reads, in one-letter code: Large ribosomal subunit protein bL32 (62 aa).

Over residues 1-16 (MAVPKRKTSPSRRGMR) the composition is skewed to basic residues. Residues 1–44 (MAVPKRKTSPSRRGMRRSADALKAPTYVEDKDSGELRRPHHIDL) are disordered. Positions 28–44 (VEDKDSGELRRPHHIDL) are enriched in basic and acidic residues.

Belongs to the bacterial ribosomal protein bL32 family.

The sequence is that of Large ribosomal subunit protein bL32 from Methylorubrum extorquens (strain CM4 / NCIMB 13688) (Methylobacterium extorquens).